A 402-amino-acid polypeptide reads, in one-letter code: NAD-dependent protein deacetylase sirtuin-7 (402 aa).

The disordered stretch occupies residues Met1–Glu23. Basic and acidic residues predominate over residues Arg9–Glu23. In terms of domain architecture, Deacetylase sirtuin-type spans Pro83–Glu330. Residues Gly108–Trp127 and Gln168–Asp171 contribute to the NAD(+) site. The active-site Proton acceptor is the His188. Residues Cys196, Cys199, Cys226, and Cys229 each contribute to the Zn(2+) site. NAD(+) is bound by residues Gly269–Ser271, Asn298–Gln300, and Cys316. Positions Ser355–Ala402 are disordered. Arg390 is modified (asymmetric dimethylarginine; alternate). Arg390 carries the post-translational modification Omega-N-methylarginine; alternate. A compositionally biased stretch (basic residues) spans Cys392–Ala402.

This sequence belongs to the sirtuin family. Class IV subfamily. As to quaternary structure, interacts with UBTF and the RNA polymerase I complex. Interacts with components of the B-WICH complex, such as MYBBP1A, SMARCA5/SNF2H and BAZ1B/WSTF. Interacts with ELK4, leading to stabilization at target promoters for H3K18Ac deacetylation. Interacts with histone H2A and/or histone H2B. Interacts with DNMT1. Interacts with SIRT1. Requires Zn(2+) as cofactor. Phosphorylated during mitosis. Post-translationally, methylation at Arg-390 by PRMT6 inhibits the H3K18Ac histone deacetylase activity, promoting mitochondria biogenesis and maintaining mitochondria respiration. In terms of processing, ubiquitinated via 'Lys-63'-linked ubiquitin chains. Deubiquitinated by USP7, inhibiting the H3K18Ac histone deacetylase activity and regulating gluconeogenesis. Ubiquitinated by E3 ubiquitin-protein ligase complex containing FBXO7; leading to proteasomal degradation. As to expression, detected in liver, spleen and testis. Detected in embryos.

Its subcellular location is the nucleus. It localises to the nucleolus. The protein resides in the nucleoplasm. It is found in the chromosome. The protein localises to the cytoplasm. The catalysed reaction is N(6)-acetyl-L-lysyl-[protein] + NAD(+) + H2O = 2''-O-acetyl-ADP-D-ribose + nicotinamide + L-lysyl-[protein]. It carries out the reaction N(6)-glutaryl-L-lysyl-[protein] + NAD(+) + H2O = 2''-O-glutaryl-ADP-D-ribose + nicotinamide + L-lysyl-[protein]. The enzyme catalyses N(6)-succinyl-L-lysyl-[protein] + NAD(+) + H2O = 2''-O-succinyl-ADP-D-ribose + nicotinamide + L-lysyl-[protein]. It catalyses the reaction N(6)-propanoyl-L-lysyl-[protein] + NAD(+) + H2O = 3''-O-propanoyl-ADP-D-ribose + nicotinamide + L-lysyl-[protein]. The catalysed reaction is N(6)-decanoyl-L-lysyl-[protein] + NAD(+) + H2O = 2''-O-decanoyl-ADP-D-ribose + nicotinamide + L-lysyl-[protein]. NAD-dependent protein-lysine deacetylase and deacylase activities are activated by nucleic acids. Histone deacetylase activity is activated by DNA. Protein-lysine deacylase activity is activated by RNA. H3K18Ac histone deacetylase activity is inhibited by methylation at Arg-390. H3K18Ac histone deacetylase activity is inhibited by deubiquitination by USP7. Functionally, NAD-dependent protein-lysine deacylase that can act both as a deacetylase or deacylase (desuccinylase, depropionylase and deglutarylase), depending on the context. Also acts as a dedecanoylase. Specifically mediates deacetylation of histone H3 at 'Lys-18' (H3K18Ac). In contrast to other histone deacetylases, displays strong preference for a specific histone mark, H3K18Ac, directly linked to control of gene expression. H3K18Ac is mainly present around the transcription start site of genes and has been linked to activation of nuclear hormone receptors; SIRT7 thereby acts as a transcription repressor. Moreover, H3K18 hypoacetylation has been reported as a marker of malignancy in various cancers and seems to maintain the transformed phenotype of cancer cells. Also able to mediate deacetylation of histone H3 at 'Lys-36' (H3K36Ac) in the context of nucleosomes. Also mediates deacetylation of non-histone proteins, such as ATM, CDK9, DDX21, DDB1, FBL, FKBP5/FKBP51, GABPB1, RAN, RRP9/U3-55K and POLR1E/PAF53. Enriched in nucleolus where it stimulates transcription activity of the RNA polymerase I complex. Acts by mediating the deacetylation of the RNA polymerase I subunit POLR1E/PAF53, thereby promoting the association of RNA polymerase I with the rDNA promoter region and coding region. In response to metabolic stress, SIRT7 is released from nucleoli leading to hyperacetylation of POLR1E/PAF53 and decreased RNA polymerase I transcription. Required to restore the transcription of ribosomal RNA (rRNA) at the exit from mitosis. Promotes pre-ribosomal RNA (pre-rRNA) cleavage at the 5'-terminal processing site by mediating deacetylation of RRP9/U3-55K, a core subunit of the U3 snoRNP complex. Mediates 'Lys-37' deacetylation of Ran, thereby regulating the nuclear export of NF-kappa-B subunit RELA/p65. Acts as a regulator of DNA damage repair by mediating deacetylation of ATM during the late stages of DNA damage response, promoting ATM dephosphorylation and deactivation. May also deacetylate p53/TP53 and promotes cell survival, however such data need additional confirmation. Suppresses the activity of the DCX (DDB1-CUL4-X-box) E3 ubiquitin-protein ligase complexes by mediating deacetylation of DDB1, which prevents the interaction between DDB1 and CUL4 (CUL4A or CUL4B). Activates RNA polymerase II transcription by mediating deacetylation of CDK9, thereby promoting 'Ser-2' phosphorylation of the C-terminal domain (CTD) of RNA polymerase II. Deacetylates FBL, promoting histone-glutamine methyltransferase activity of FBL. Acts as a regulator of mitochondrial function by catalyzing deacetylation of GABPB1. Regulates Akt/AKT1 activity by mediating deacetylation of FKBP5/FKBP51. Required to prevent R-loop-associated DNA damage and transcription-associated genomic instability by mediating deacetylation and subsequent activation of DDX21, thereby overcoming R-loop-mediated stalling of RNA polymerases. In addition to protein deacetylase activity, also acts as protein-lysine deacylase. Acts as a protein depropionylase by mediating depropionylation of Osterix (SP7), thereby regulating bone formation by osteoblasts. Acts as a histone deglutarylase by mediating deglutarylation of histone H4 on 'Lys-91' (H4K91glu); a mark that destabilizes nucleosomes by promoting dissociation of the H2A-H2B dimers from nucleosomes. Acts as a histone desuccinylase: in response to DNA damage, recruited to DNA double-strand breaks (DSBs) and catalyzes desuccinylation of histone H3 on 'Lys-122' (H3K122succ), thereby promoting chromatin condensation and DSB repair. Also promotes DSB repair by promoting H3K18Ac deacetylation, regulating non-homologous end joining (NHEJ). Along with its role in DNA repair, required for chromosome synapsis during prophase I of female meiosis by catalyzing H3K18Ac deacetylation. Involved in transcriptional repression of LINE-1 retrotransposon via H3K18Ac deacetylation, and promotes their association with the nuclear lamina. Required to stabilize ribosomal DNA (rDNA) heterochromatin and prevent cellular senescence induced by rDNA instability. Acts as a negative regulator of SIRT1 by preventing autodeacetylation of SIRT1, restricting SIRT1 deacetylase activity. The chain is NAD-dependent protein deacetylase sirtuin-7 from Mus musculus (Mouse).